The chain runs to 51 residues: Large ribosomal subunit protein eL39 (51 aa).

Residues 1–15 show a composition bias toward basic residues; the sequence is MAAKKSFKIKQKLAK. Residues 1–21 are disordered; it reads MAAKKSFKIKQKLAKAKNQNR.

The protein belongs to the eukaryotic ribosomal protein eL39 family. In terms of assembly, interacts with YIH1.

This Eremothecium gossypii (strain ATCC 10895 / CBS 109.51 / FGSC 9923 / NRRL Y-1056) (Yeast) protein is Large ribosomal subunit protein eL39 (RPL39).